A 116-amino-acid polypeptide reads, in one-letter code: Venom nerve growth factor (116 aa).

3 cysteine pairs are disulfide-bonded: Cys-14–Cys-78, Cys-56–Cys-106, and Cys-66–Cys-108.

The protein belongs to the NGF-beta family. Homodimer; non-covalently linked. Post-translationally, not glycosylated. Expressed by the venom gland.

It is found in the secreted. Its function is as follows. Nerve growth factor is important for the development and maintenance of the sympathetic and sensory nervous systems. It stimulates division and differentiation of sympathetic and embryonic sensory neurons as well as basal forebrain cholinergic neurons in the brain. Its relevance in the snake venom is not clear. However, it has been shown to inhibit metalloproteinase-dependent proteolysis of platelet glycoprotein Ib alpha, suggesting a metalloproteinase inhibition to prevent metalloprotease autodigestion and/or protection against prey proteases. Binds a lipid between the two protein chains in the homodimer. The lipid-bound form promotes histamine relase from mouse mast cells, contrary to the lipid-free form. The sequence is that of Venom nerve growth factor from Naja naja (Indian cobra).